The sequence spans 341 residues: MNNLIKYSTFLISDLFDVVIGKTIDGNKAQRNENGTPYITRKATRNGFEFMIDGEKEKLYSGKLPVITIGNETSKPFVQEFHFFTGTKVNICIPKLDLNRNHLLYITTMIENATKMFSYSYTINSTRLKSLKILLPIKGEEPDWDYMNTYISKILSNMEKNFDVQQNDGVSDLRSLKDLSWSQFKMDEIFSINSGVRLTKADMKPGNIPFIGATDSNNGITEFTSSTNASFDGNVLGVNYNGSVVENFYHPYKAVFSDDVKRLKLKNYPNNKHVLLFMKVVILQQKVKYAYGYKFNATRMKEQIILLPTKADGTPDYEFMEQYMMRMENKVVGRTTEKEAD.

Belongs to the type-I restriction system S methylase family. Heterotrimer of two A and one B subunit. Both subunits are necessary for DNA-binding, which is sequence non-specific. Mg(2+) is required as a cofactor.

It carries out the reaction Endonucleolytic cleavage of DNA to give specific double-stranded fragments with terminal 5'-phosphates.. With respect to regulation, DNA restriction requires S-adenosyl-L-methionine and Mg(2+), and is inhibited by S-adenosyl-homocysteine. SAM may be a cofactor for DNA restriction. Its function is as follows. The specificity subunit. A B, G, H and S subtype restriction enzyme that recognizes the double-stranded sequence 5'-CGAN(6)TGC-3' and cleaves bilaterally and symmetrically 10 base pairs upstream and 12 base pairs downstream of the sequence to release a 34-base pair fragment. Methylation of the recognition sequence occurs on the adenine in either one or both strands; seems to methylate restricted DNA. This subunit degrades DNA in a non-specific manner. This chain is Type II restriction enzyme BgcI specificity subunit S.BcgI, found in Heyndrickxia coagulans (Weizmannia coagulans).